The chain runs to 356 residues: MSTVTITDLARENVRNLTPYQSARRLGGNGDVWLNANEYPTAVEFQLTQQTLNRYPECQPKAVIENYAQYAGVKPEQVLVSRGADEGIELLIRAFCEPGKDAILYCPPTYGMYSVSAETIGVECRTVPTLENWQLDLQGISDKLDGVKVVYVCSPNNPTGQLINPQDFRTLLELTRGKAIVVADEAYIEFCPQASLAGWLAEYPHLAILRTLSKAFALAGLRCGFTLANEEVINLLMKVIAPYPLSTPVADIAAQALSPQGIIAMRERVAQIIAEREYLIAALKEIPCVEQVFDSETNYILARFKASSAVFKSLWDQGIILRDQNKQPSLSGCLRITVGTREESQRVIDALRAEQV.

The residue at position 214 (Lys-214) is an N6-(pyridoxal phosphate)lysine.

This sequence belongs to the class-II pyridoxal-phosphate-dependent aminotransferase family. Histidinol-phosphate aminotransferase subfamily. In terms of assembly, homodimer. It depends on pyridoxal 5'-phosphate as a cofactor.

The enzyme catalyses L-histidinol phosphate + 2-oxoglutarate = 3-(imidazol-4-yl)-2-oxopropyl phosphate + L-glutamate. Its pathway is amino-acid biosynthesis; L-histidine biosynthesis; L-histidine from 5-phospho-alpha-D-ribose 1-diphosphate: step 7/9. The chain is Histidinol-phosphate aminotransferase (hisC) from Escherichia coli O157:H7.